The sequence spans 374 residues: Chaperone protein DnaJ (374 aa).

The region spanning 3–67 (DFYQILGVSR…ETRARYDQFG (65 aa)) is the J domain. The segment at 99–118 (GQSSQGGRSQRRGPQQGDDL) is disordered. Low complexity predominate over residues 103-115 (QGGRSQRRGPQQG). The CR-type zinc finger occupies 132 to 214 (GQQREINIPH…CGGNGVKQVR (83 aa)). Residues cysteine 145, cysteine 148, cysteine 162, cysteine 165, cysteine 188, cysteine 191, cysteine 202, and cysteine 205 each coordinate Zn(2+). CXXCXGXG motif repeat units lie at residues 145 to 152 (CEVCRGTG), 162 to 169 (CTTCGGSG), 188 to 195 (CPTCNGVG), and 202 to 209 (CTSCGGNG).

This sequence belongs to the DnaJ family. Homodimer. Requires Zn(2+) as cofactor.

It is found in the cytoplasm. In terms of biological role, participates actively in the response to hyperosmotic and heat shock by preventing the aggregation of stress-denatured proteins and by disaggregating proteins, also in an autonomous, DnaK-independent fashion. Unfolded proteins bind initially to DnaJ; upon interaction with the DnaJ-bound protein, DnaK hydrolyzes its bound ATP, resulting in the formation of a stable complex. GrpE releases ADP from DnaK; ATP binding to DnaK triggers the release of the substrate protein, thus completing the reaction cycle. Several rounds of ATP-dependent interactions between DnaJ, DnaK and GrpE are required for fully efficient folding. Also involved, together with DnaK and GrpE, in the DNA replication of plasmids through activation of initiation proteins. This chain is Chaperone protein DnaJ, found in Prochlorococcus marinus subsp. pastoris (strain CCMP1986 / NIES-2087 / MED4).